The following is a 681-amino-acid chain: uncharacterized protein (681 aa).

Belongs to the protein kinase superfamily. ADCK protein kinase family.

This is an uncharacterized protein from Synechocystis sp. (strain ATCC 27184 / PCC 6803 / Kazusa).